Reading from the N-terminus, the 201-residue chain is MYAYIKGKLSQLFPTHVVVETNGVGYEIQTPNSYRFQQYYQQEVTIYTSLVVREDAQLLYGFMSEEEKGMFLSLNKVTGIGPKSALAILAASTPNEVKIGIENENETYLTKFPGIGKKTARQIILDLKGKVQITEENPETLLNFEGSESNQTSPILDEALLALEALGYSKRELNKVEKKLQAESYTSVDEAVKAGLKILVS.

Residues 1-63 (MYAYIKGKLS…EDAQLLYGFM (63 aa)) are domain I. Residues 64–142 (SEEEKGMFLS…ITEENPETLL (79 aa)) form a domain II region. Residues 143–153 (NFEGSESNQTS) form a flexible linker region. The segment at 153–201 (SPILDEALLALEALGYSKRELNKVEKKLQAESYTSVDEAVKAGLKILVS) is domain III.

This sequence belongs to the RuvA family. As to quaternary structure, homotetramer. Forms an RuvA(8)-RuvB(12)-Holliday junction (HJ) complex. HJ DNA is sandwiched between 2 RuvA tetramers; dsDNA enters through RuvA and exits via RuvB. An RuvB hexamer assembles on each DNA strand where it exits the tetramer. Each RuvB hexamer is contacted by two RuvA subunits (via domain III) on 2 adjacent RuvB subunits; this complex drives branch migration. In the full resolvosome a probable DNA-RuvA(4)-RuvB(12)-RuvC(2) complex forms which resolves the HJ.

It is found in the cytoplasm. In terms of biological role, the RuvA-RuvB-RuvC complex processes Holliday junction (HJ) DNA during genetic recombination and DNA repair, while the RuvA-RuvB complex plays an important role in the rescue of blocked DNA replication forks via replication fork reversal (RFR). RuvA specifically binds to HJ cruciform DNA, conferring on it an open structure. The RuvB hexamer acts as an ATP-dependent pump, pulling dsDNA into and through the RuvAB complex. HJ branch migration allows RuvC to scan DNA until it finds its consensus sequence, where it cleaves and resolves the cruciform DNA. This chain is Holliday junction branch migration complex subunit RuvA, found in Staphylococcus carnosus (strain TM300).